The primary structure comprises 218 residues: Probable GTP-binding protein EngB (218 aa).

One can recognise an EngB-type G domain in the interval 31 to 205 (VGVEIAFAGR…LGILNEWCHP (175 aa)). Residues 39–46 (GRSNAGKS), 66–70 (GRTQL), 84–87 (DLPG), 151–154 (TKCD), and 184–186 (FSS) each bind GTP. Residues Ser46 and Thr68 each contribute to the Mg(2+) site.

The protein belongs to the TRAFAC class TrmE-Era-EngA-EngB-Septin-like GTPase superfamily. EngB GTPase family. Mg(2+) serves as cofactor.

In terms of biological role, necessary for normal cell division and for the maintenance of normal septation. The chain is Probable GTP-binding protein EngB from Shewanella loihica (strain ATCC BAA-1088 / PV-4).